The sequence spans 561 residues: GPI mannosyltransferase 3 (561 aa).

Transmembrane regions (helical) follow at residues 3–25 (LIYVFLLILAVRLASVFVVQTYY), 64–84 (IAGLYKILALLQLDSAHLLVV), 110–130 (WALFLILVPWFWFYTGSRTLA), 155–175 (LWPAAICCFLRPTAAVIWLPL), 195–215 (FVLIGLLVAGLGIAIDTYWHG), 246–266 (FSVGLPTVLGINTLPFIFGVM), 275–295 (YPVSKQLLITIFLTLVVLSAV), and 328–348 (TMLWTTALVILVGNVMPAWYL). N-linked (GlcNAc...) asparagine glycans are attached at residues Asn398 and Asn456. The interval 525 to 546 (ENAFNRGPDSGQHEPDVHDHPP) is disordered. Residues 535–546 (GQHEPDVHDHPP) show a composition bias toward basic and acidic residues.

It belongs to the glycosyltransferase 22 family. PIGB subfamily.

It localises to the endoplasmic reticulum membrane. Its pathway is glycolipid biosynthesis; glycosylphosphatidylinositol-anchor biosynthesis. Its function is as follows. Mannosyltransferase involved in glycosylphosphatidylinositol-anchor biosynthesis. Transfers the third alpha-1,2-mannose to Man2-GlcN-acyl-PI during GPI precursor assembly. This chain is GPI mannosyltransferase 3, found in Drosophila melanogaster (Fruit fly).